The chain runs to 207 residues: Small ribosomal subunit protein uS2 (207 aa).

It belongs to the universal ribosomal protein uS2 family.

The chain is Small ribosomal subunit protein uS2 from Pyrobaculum islandicum (strain DSM 4184 / JCM 9189 / GEO3).